A 261-amino-acid chain; its full sequence is MEMO1 family protein AF_2310 (261 aa).

It belongs to the MEMO1 family.

The sequence is that of MEMO1 family protein AF_2310 from Archaeoglobus fulgidus (strain ATCC 49558 / DSM 4304 / JCM 9628 / NBRC 100126 / VC-16).